A 144-amino-acid polypeptide reads, in one-letter code: Nucleoside diphosphate kinase (144 aa).

Residues Lys-9, Phe-57, Arg-85, Thr-91, Arg-102, and Asn-112 each contribute to the ATP site. His-120 acts as the Pros-phosphohistidine intermediate in catalysis.

The protein belongs to the NDK family. In terms of assembly, homotetramer. Requires Mg(2+) as cofactor.

The protein localises to the cytoplasm. The enzyme catalyses a 2'-deoxyribonucleoside 5'-diphosphate + ATP = a 2'-deoxyribonucleoside 5'-triphosphate + ADP. It carries out the reaction a ribonucleoside 5'-diphosphate + ATP = a ribonucleoside 5'-triphosphate + ADP. Functionally, major role in the synthesis of nucleoside triphosphates other than ATP. The ATP gamma phosphate is transferred to the NDP beta phosphate via a ping-pong mechanism, using a phosphorylated active-site intermediate. The sequence is that of Nucleoside diphosphate kinase from Streptococcus uberis (strain ATCC BAA-854 / 0140J).